The chain runs to 939 residues: Valine--tRNA ligase (939 aa).

Residues 47 to 57 (PNVTGILHMGH) carry the 'HIGH' region motif. Positions 563–567 (KLSKS) match the 'KMSKS' region motif. Lys-566 contacts ATP. The stretch at 874 to 939 (EHLAKERVRL…QSILDKLASL (66 aa)) forms a coiled coil.

The protein belongs to the class-I aminoacyl-tRNA synthetase family. ValS type 1 subfamily. As to quaternary structure, monomer.

Its subcellular location is the cytoplasm. It catalyses the reaction tRNA(Val) + L-valine + ATP = L-valyl-tRNA(Val) + AMP + diphosphate. Catalyzes the attachment of valine to tRNA(Val). As ValRS can inadvertently accommodate and process structurally similar amino acids such as threonine, to avoid such errors, it has a 'posttransfer' editing activity that hydrolyzes mischarged Thr-tRNA(Val) in a tRNA-dependent manner. This is Valine--tRNA ligase from Chlamydia trachomatis serovar A (strain ATCC VR-571B / DSM 19440 / HAR-13).